The following is a 754-amino-acid chain: Putative sulfate transporter YPR003C (754 aa).

A disordered region spans residues 1 to 91 (MTSNNSLLGR…NTSNTNNNDS (91 aa)). Over 1–118 (MTSNNSLLGR…SWLPEYTFNK (118 aa)) the chain is Cytoplasmic. Residues 25–45 (RSVDQRDTFSDNFDYDKDSSN) are compositionally biased toward basic and acidic residues. Residues 65–89 (NSRSGCTNNTNNTNNTSNTSNTNNN) show a composition bias toward low complexity. The helical transmembrane segment at 119-139 (LWGDVIAGISVASFQIPLALS) threads the bilayer. Residues 140–146 (YTTSIAH) lie on the Lumenal side of the membrane. A helical transmembrane segment spans residues 147–167 (VPPLCGLYSLAISPFVYGILG). Residues 168 to 172 (SVPQM) are Cytoplasmic-facing. Residues 173–193 (IVGPESAISLVVGQAVESITL) form a helical membrane-spanning segment. Topologically, residues 194–199 (HKENVS) are lumenal. Residues 200 to 220 (LIDISTVITFVSGTILLFSGI) traverse the membrane as a helical segment. Residues 221–232 (SRFGFLGNVLSK) are Cytoplasmic-facing. The helical transmembrane segment at 233–253 (ALLRGFISSVGLVMIINSLIS) threads the bilayer. The Lumenal segment spans residues 254–282 (ELKLDKFLVSLPQHYHTPFEKILFLIDYA). The helical transmembrane segment at 283 to 303 (PAQYHIPTAIFSGCCLIVLFL) threads the bilayer. Over 304-317 (TRLLKRKLMKYHKS) the chain is Cytoplasmic. A helical membrane pass occupies residues 318-338 (AIFFPDILLVVIVTILISMKF). Over 339 to 370 (NLKHRYGISIIGDFSMDNFDELKNPLTRPRRK) the chain is Lumenal. A helical transmembrane segment spans residues 371–391 (LIPDLFSASLIVAMLGFFEST). Residues 392–410 (TASKSLGTTYNLTVSSNRE) are Cytoplasmic-facing. The chain crosses the membrane as a helical span at residues 411–431 (LVALGFMNIVISLFGALPAFG). The Lumenal portion of the chain corresponds to 432–450 (GYGRSKINALSGAQSVMSG). The helical transmembrane segment at 451 to 471 (VFMGVITLITMNLLLQFVHYI) threads the bilayer. The Cytoplasmic portion of the chain corresponds to 472 to 474 (PNC). A helical membrane pass occupies residues 475–495 (VLSVITTIIGISLLEEVPGDI). Residues 496–517 (KFHLRCGGFSELFVFAVTFCTT) are Lumenal-facing. A helical transmembrane segment spans residues 518–538 (IFYSIEAGICIGCVYSIINII). Residues 539–754 (KHSAKSRIQI…SNTLFNSSLV (216 aa)) are Cytoplasmic-facing. Residues 574–725 (DVEGTEEIEG…DSIDAALYEI (152 aa)) enclose the STAS domain.

This sequence belongs to the SLC26A/SulP transporter (TC 2.A.53) family.

The protein resides in the endoplasmic reticulum membrane. Possible sulfate transporter. The polypeptide is Putative sulfate transporter YPR003C (Saccharomyces cerevisiae (strain ATCC 204508 / S288c) (Baker's yeast)).